We begin with the raw amino-acid sequence, 152 residues long: Ribosome maturation factor RimP (152 aa).

The protein belongs to the RimP family.

Its subcellular location is the cytoplasm. Functionally, required for maturation of 30S ribosomal subunits. The chain is Ribosome maturation factor RimP from Brevibacillus brevis (strain 47 / JCM 6285 / NBRC 100599).